Consider the following 263-residue polypeptide: MGAIQARLPLFLSPPSIKHHTFLHSSSSNSNFKIRSNKSSSSSSSSIIMASIKVHGVPMSTATMRVLATLYEKDLQFELIPVDMRAGAHKQEAHLALNPFGQIPALEDGDLTLFESRAITQYLAEEYSEKGEKLISQDCKKVKATTNVWLQVEGQQFDPNASKLAFERVFKGMFGMTTDPAAVQELEGKLQKVLDVYEARLAKSEFLAGDSFTLADLHHLPAIHYLLGTDSKVLFDSRPKVSEWIKKISARPAWAKVIDLQKQ.

The transit peptide at 1-49 (MGAIQARLPLFLSPPSIKHHTFLHSSSSNSNFKIRSNKSSSSSSSSIIM) directs the protein to the chloroplast. The 82-residue stretch at 50–131 (ASIKVHGVPM…YLAEEYSEKG (82 aa)) folds into the GST N-terminal domain. Residues 60–61 (ST), 89–90 (HK), 102–103 (QI), and 115–116 (ES) contribute to the glutathione site. Residues 139–263 (CKKVKATTNV…WAKVIDLQKQ (125 aa)) enclose the GST C-terminal domain. Thr177 carries the phosphothreonine modification.

This sequence belongs to the GST superfamily. Phi family. Isoform 1 is predominantly expressed in leaves and isoform 2 in roots.

The protein localises to the plastid. The protein resides in the chloroplast. It is found in the cytoplasm. It localises to the cytosol. It catalyses the reaction RX + glutathione = an S-substituted glutathione + a halide anion + H(+). In terms of biological role, in vitro, possesses glutathione S-transferase activity toward 1-chloro-2,4-dinitrobenzene (CDNB) and glutathione peroxidase activity toward cumene hydroperoxide and linoleic acid-13-hydroperoxide. May be involved in the conjugation of reduced glutathione to a wide number of exogenous and endogenous hydrophobic electrophiles and have a detoxification role against certain herbicides. This is Glutathione S-transferase F8, chloroplastic (GSTF8) from Arabidopsis thaliana (Mouse-ear cress).